A 451-amino-acid polypeptide reads, in one-letter code: Chromosomal replication initiator protein DnaA (451 aa).

The domain I, interacts with DnaA modulators stretch occupies residues Met1–Glu93. Residues Glu88–Ser108 form a disordered region. The domain II stretch occupies residues Gln94–Thr113. The domain III, AAA+ region stretch occupies residues Met114–Ser330. Residues Gly158, Gly160, Lys161, and Thr162 each contribute to the ATP site. Positions Ser331 to Gln451 are domain IV, binds dsDNA.

It belongs to the DnaA family. In terms of assembly, oligomerizes as a right-handed, spiral filament on DNA at oriC.

It localises to the cytoplasm. Functionally, plays an essential role in the initiation and regulation of chromosomal replication. ATP-DnaA binds to the origin of replication (oriC) to initiate formation of the DNA replication initiation complex once per cell cycle. Binds the DnaA box (a 9 base pair repeat at the origin) and separates the double-stranded (ds)DNA. Forms a right-handed helical filament on oriC DNA; dsDNA binds to the exterior of the filament while single-stranded (ss)DNA is stabiized in the filament's interior. The ATP-DnaA-oriC complex binds and stabilizes one strand of the AT-rich DNA unwinding element (DUE), permitting loading of DNA polymerase. After initiation quickly degrades to an ADP-DnaA complex that is not apt for DNA replication. Binds acidic phospholipids. The chain is Chromosomal replication initiator protein DnaA from Shouchella clausii (strain KSM-K16) (Alkalihalobacillus clausii).